The chain runs to 405 residues: Riboflavin biosynthesis protein RibBA (405 aa).

The segment at 1 to 205 is DHBP synthase; sequence MEEIKLNTIE…IKDLIAYRLK (205 aa). Residues 30–31, aspartate 35, 144–148, and glutamate 168 contribute to the D-ribulose 5-phosphate site; these read RE and RAGHT. Mg(2+) is bound at residue glutamate 31. Residue histidine 147 coordinates Mg(2+). The segment at 206 to 405 is GTP cyclohydrolase II; it reads QESIVEKGVE…RMGHELHNIK (200 aa). 256-260 contacts GTP; that stretch reads RMHSS. The Zn(2+) site is built by cysteine 261, cysteine 272, and cysteine 274. Residues glutamine 277, 299 to 301, and threonine 321 contribute to the GTP site; that span reads EGR. The active-site Proton acceptor; for GTP cyclohydrolase activity is the aspartate 333. Residue arginine 335 is the Nucleophile; for GTP cyclohydrolase activity of the active site. Positions 356 and 361 each coordinate GTP.

In the N-terminal section; belongs to the DHBP synthase family. The protein in the C-terminal section; belongs to the GTP cyclohydrolase II family. It depends on Mg(2+) as a cofactor. Mn(2+) serves as cofactor. Zn(2+) is required as a cofactor.

It catalyses the reaction D-ribulose 5-phosphate = (2S)-2-hydroxy-3-oxobutyl phosphate + formate + H(+). The enzyme catalyses GTP + 4 H2O = 2,5-diamino-6-hydroxy-4-(5-phosphoribosylamino)-pyrimidine + formate + 2 phosphate + 3 H(+). It participates in cofactor biosynthesis; riboflavin biosynthesis; 2-hydroxy-3-oxobutyl phosphate from D-ribulose 5-phosphate: step 1/1. It functions in the pathway cofactor biosynthesis; riboflavin biosynthesis; 5-amino-6-(D-ribitylamino)uracil from GTP: step 1/4. Its function is as follows. Catalyzes the conversion of D-ribulose 5-phosphate to formate and 3,4-dihydroxy-2-butanone 4-phosphate. In terms of biological role, catalyzes the conversion of GTP to 2,5-diamino-6-ribosylamino-4(3H)-pyrimidinone 5'-phosphate (DARP), formate and pyrophosphate. In Porphyromonas gingivalis (strain ATCC 33277 / DSM 20709 / CIP 103683 / JCM 12257 / NCTC 11834 / 2561), this protein is Riboflavin biosynthesis protein RibBA.